A 453-amino-acid chain; its full sequence is Serine incorporator 1 (453 aa).

G2 is lipidated: N-myristoyl glycine. Residues 2 to 39 (GSVLGLCSVASWIPCLCGSAPCLLCRCCPSGNNSTVTR) lie on the Cytoplasmic side of the membrane. The chain crosses the membrane as a helical span at residues 40–60 (LIYALFLLVGVCVACVMLIPG). The Lumenal segment spans residues 61-88 (MEEQLNKIPGFCENEKGVVPCNILVGYK). A helical transmembrane segment spans residues 89 to 109 (AVYRLCFGLAMFYLLLSLLMI). Residues 110–123 (KVKSSSDPRAAVHN) are Cytoplasmic-facing. A helical membrane pass occupies residues 124-144 (GFWFFKFATAVAIIIGAFFIP). The Lumenal segment spans residues 145–151 (EGTFTTV). A helical transmembrane segment spans residues 152–172 (WFYVGMAGAFCFILIQLVLLI). Topologically, residues 173-197 (DFAHSWNESWVEKMEEGNSRCWYAA) are cytoplasmic. A helical membrane pass occupies residues 198–218 (LLSATALNYLLSLVAVVLFFV). The Lumenal portion of the chain corresponds to 219-231 (YYTHPASCAENKA). The helical transmembrane segment at 232–252 (FISVNMLLCIGASVMSILPKI) threads the bilayer. At 253–259 (QESQPRS) the chain is on the cytoplasmic side. A helical transmembrane segment spans residues 260–280 (GLLQSSVITVYTMYLTWSAMT). The Lumenal portion of the chain corresponds to 281–309 (NEPETNCNPSLLSIIGFNTTRPIPKDGQS). A helical transmembrane segment spans residues 310-330 (VQWWHPQGIIGLVLFLLCVFY). Topologically, residues 331 to 387 (SSIRTSNNSQVNKLTLTSDESTLIEDGNGRSDGSLDDGDGIHRAVDNERDGVTYSYS) are cytoplasmic. At S351 the chain carries Phosphoserine. Residue T352 is modified to Phosphothreonine. A phosphoserine mark is found at S361 and S364. A helical membrane pass occupies residues 388 to 408 (FFHFMLFLASLYIMMTLTNWY). The Lumenal portion of the chain corresponds to 409-426 (RYEPSREMKSQWTAVWVK). A helical transmembrane segment spans residues 427 to 447 (ISSSWIGLVLYVWTLVAPLVL). Residues 448 to 453 (TNRDFD) lie on the Cytoplasmic side of the membrane.

Belongs to the TDE1 family. Interacts with SPTLC1. In terms of tissue distribution, highly expressed in the neuronal populations such as Purkinje cells in the cerebellum, brainstem and spinal motor neurons, locus coeruleus and raphe nuclei.

It is found in the endoplasmic reticulum membrane. In terms of biological role, enhances the incorporation of serine into phosphatidylserine and sphingolipids. The chain is Serine incorporator 1 (Serinc1) from Mus musculus (Mouse).